Here is a 280-residue protein sequence, read N- to C-terminus: Aspartate/glutamate leucyltransferase (280 aa).

The protein belongs to the R-transferase family. Bpt subfamily.

The protein resides in the cytoplasm. The catalysed reaction is N-terminal L-glutamyl-[protein] + L-leucyl-tRNA(Leu) = N-terminal L-leucyl-L-glutamyl-[protein] + tRNA(Leu) + H(+). It catalyses the reaction N-terminal L-aspartyl-[protein] + L-leucyl-tRNA(Leu) = N-terminal L-leucyl-L-aspartyl-[protein] + tRNA(Leu) + H(+). Its function is as follows. Functions in the N-end rule pathway of protein degradation where it conjugates Leu from its aminoacyl-tRNA to the N-termini of proteins containing an N-terminal aspartate or glutamate. The chain is Aspartate/glutamate leucyltransferase from Cereibacter sphaeroides (strain KD131 / KCTC 12085) (Rhodobacter sphaeroides).